We begin with the raw amino-acid sequence, 464 residues long: Phospho-2-dehydro-3-deoxyheptonate aldolase AroG (464 aa).

Mn(2+) is bound at residue cysteine 87. Residues arginine 126, 285-286, lysine 308, and arginine 339 each bind phosphoenolpyruvate; that span reads ER. Mn(2+)-binding residues include histidine 371, glutamate 413, and aspartate 443.

This sequence belongs to the class-II DAHP synthase family. Homodimer. Probably interacts with MSMEG_5536. The cofactor is Mn(2+). Requires Co(2+) as cofactor. Cd(2+) is required as a cofactor.

It catalyses the reaction D-erythrose 4-phosphate + phosphoenolpyruvate + H2O = 7-phospho-2-dehydro-3-deoxy-D-arabino-heptonate + phosphate. It functions in the pathway metabolic intermediate biosynthesis; chorismate biosynthesis; chorismate from D-erythrose 4-phosphate and phosphoenolpyruvate: step 1/7. Catalyzes an aldol-like condensation reaction between phosphoenolpyruvate (PEP) and D-erythrose 4-phosphate (E4P) to generate 3-deoxy-D-arabino-heptulosonate 7-phosphate (DAH7P) and inorganic phosphate. In Mycolicibacterium smegmatis (strain ATCC 700084 / mc(2)155) (Mycobacterium smegmatis), this protein is Phospho-2-dehydro-3-deoxyheptonate aldolase AroG (aroG).